Consider the following 260-residue polypeptide: Dynein regulatory complex subunit 6 (260 aa).

The segment covering 1–13 (MAPKKKGGGKKKK) has biased composition (basic residues). The segment at 1 to 43 (MAPKKKGGGKKKKKDDGAEPPHDGSWERAVESGTWEKPVTDLP) is disordered. A compositionally biased stretch (basic and acidic residues) spans 14-30 (KDDGAEPPHDGSWERAV).

It belongs to the DRC6 family. As to quaternary structure, component of the nexin-dynein regulatory complex (N-DRC).

It localises to the cytoplasm. The protein resides in the cytoskeleton. It is found in the flagellum axoneme. Functionally, component of the nexin-dynein regulatory complex (N-DRC), a key regulator of ciliary/flagellar motility which maintains the alignment and integrity of the distal axoneme and regulates microtubule sliding in motile axonemes. The polypeptide is Dynein regulatory complex subunit 6 (Chlamydomonas reinhardtii (Chlamydomonas smithii)).